We begin with the raw amino-acid sequence, 297 residues long: Phosphatidylserine decarboxylase proenzyme (297 aa).

Residues Asp90, His147, and Ser252 each act as charge relay system; for autoendoproteolytic cleavage activity in the active site. The active-site Schiff-base intermediate with substrate; via pyruvic acid; for decarboxylase activity is Ser252. At Ser252 the chain carries Pyruvic acid (Ser); by autocatalysis.

It belongs to the phosphatidylserine decarboxylase family. PSD-B subfamily. Prokaryotic type I sub-subfamily. As to quaternary structure, heterodimer of a large membrane-associated beta subunit and a small pyruvoyl-containing alpha subunit. It depends on pyruvate as a cofactor. In terms of processing, is synthesized initially as an inactive proenzyme. Formation of the active enzyme involves a self-maturation process in which the active site pyruvoyl group is generated from an internal serine residue via an autocatalytic post-translational modification. Two non-identical subunits are generated from the proenzyme in this reaction, and the pyruvate is formed at the N-terminus of the alpha chain, which is derived from the carboxyl end of the proenzyme. The autoendoproteolytic cleavage occurs by a canonical serine protease mechanism, in which the side chain hydroxyl group of the serine supplies its oxygen atom to form the C-terminus of the beta chain, while the remainder of the serine residue undergoes an oxidative deamination to produce ammonia and the pyruvoyl prosthetic group on the alpha chain. During this reaction, the Ser that is part of the protease active site of the proenzyme becomes the pyruvoyl prosthetic group, which constitutes an essential element of the active site of the mature decarboxylase.

The protein localises to the cell membrane. The enzyme catalyses a 1,2-diacyl-sn-glycero-3-phospho-L-serine + H(+) = a 1,2-diacyl-sn-glycero-3-phosphoethanolamine + CO2. The protein operates within phospholipid metabolism; phosphatidylethanolamine biosynthesis; phosphatidylethanolamine from CDP-diacylglycerol: step 2/2. In terms of biological role, catalyzes the formation of phosphatidylethanolamine (PtdEtn) from phosphatidylserine (PtdSer). The sequence is that of Phosphatidylserine decarboxylase proenzyme from Stutzerimonas stutzeri (strain A1501) (Pseudomonas stutzeri).